Reading from the N-terminus, the 569-residue chain is Cytosolic purine 5'-nucleotidase (569 aa).

Catalysis depends on D52, which acts as the Nucleophile. Residues D52 and D54 each coordinate IMP. 2 residues coordinate Mg(2+): D52 and D54. D54 serves as the catalytic Proton donor. The ATP site is built by R144 and N154. The IMP site is built by R202, D206, K215, T249, N250, S251, and K292. A Mg(2+)-binding site is contributed by D351. ATP-binding residues include Q453 and R456. The segment at S527–E569 is disordered. The required for tetramer assembly stretch occupies residues H548 to E569. The span at E550–E569 shows a compositional bias: acidic residues.

The protein belongs to the 5'(3')-deoxyribonucleotidase family. Homotetramer. The cofactor is Mg(2+).

It localises to the cytoplasm. It is found in the cytosol. It carries out the reaction a ribonucleoside 5'-phosphate + H2O = a ribonucleoside + phosphate. The catalysed reaction is a 2'-deoxyribonucleoside + a ribonucleoside 5'-phosphate = a ribonucleoside + a 2'-deoxyribonucleoside 5'-phosphate. It catalyses the reaction IMP + H2O = inosine + phosphate. The enzyme catalyses GMP + H2O = guanosine + phosphate. It carries out the reaction dGMP + H2O = 2'-deoxyguanosine + phosphate. The catalysed reaction is dIMP + H2O = 2'-deoxyinosine + phosphate. It catalyses the reaction XMP + H2O = xanthosine + phosphate. The enzyme catalyses inosine + GMP = guanosine + IMP. It carries out the reaction dGMP + inosine = 2'-deoxyguanosine + IMP. The catalysed reaction is dIMP + inosine = 2'-deoxyinosine + IMP. It catalyses the reaction inosine + UMP = uridine + IMP. The enzyme catalyses inosine + CMP = cytidine + IMP. It carries out the reaction inosine + AMP = IMP + adenosine. Its activity is regulated as follows. Allosterically activated by various compounds including ATP, 2,3-BPG/2,3-Bisphosphoglyceric acid and Ap4A/P1,P4-bis(5'-adenosyl) tetraphosphate. Binding of an allosteric activator is a prerequisiste to magnesium and substrate binding. Inhibited by inorganic phosphate. Inhibited by inosine, guanosine, p-chloromercuribenzoate and NaF. Broad specificity cytosolic 5'-nucleotidase that catalyzes the dephosphorylation of 6-hydroxypurine nucleoside 5'-monophosphates. In addition, possesses a phosphotransferase activity by which it can transfer a phosphate from a donor nucleoside monophosphate to an acceptor nucleoside, preferably inosine, deoxyinosine and guanosine. Has the highest activities for IMP and GMP followed by dIMP, dGMP and XMP. Could also catalyze the transfer of phosphates from pyrimidine monophosphates but with lower efficiency. Through these activities regulates the purine nucleoside/nucleotide pools within the cell. The polypeptide is Cytosolic purine 5'-nucleotidase (NT5C2) (Gallus gallus (Chicken)).